Consider the following 241-residue polypeptide: Pyridoxal phosphate phosphatase PHOSPHO2 (241 aa).

Asp-8 (nucleophile) is an active-site residue. Mg(2+) is bound by residues Asp-8 and Asp-10. The active-site Proton donor is Asp-10. Asp-19 and Asp-99 together coordinate substrate. Residue Asp-179 coordinates Mg(2+).

The protein belongs to the HAD-like hydrolase superfamily. PHOSPHO family. Requires Mg(2+) as cofactor.

The enzyme catalyses pyridoxal 5'-phosphate + H2O = pyridoxal + phosphate. Functionally, phosphatase that has high activity toward pyridoxal 5'-phosphate (PLP). Also active at much lower level toward pyrophosphate, phosphoethanolamine (PEA), phosphocholine (PCho), phospho-l-tyrosine, fructose-6-phosphate, p-nitrophenyl phosphate, and h-glycerophosphate. In Homo sapiens (Human), this protein is Pyridoxal phosphate phosphatase PHOSPHO2 (PHOSPHO2).